Consider the following 101-residue polypeptide: Chaperone modulatory protein CbpM (101 aa).

Belongs to the CbpM family.

Functionally, interacts with CbpA and inhibits both the DnaJ-like co-chaperone activity and the DNA binding activity of CbpA. Together with CbpA, modulates the activity of the DnaK chaperone system. Does not inhibit the co-chaperone activity of DnaJ. This chain is Chaperone modulatory protein CbpM, found in Pseudomonas putida (strain W619).